A 693-amino-acid chain; its full sequence is Heat shock protein homolog SSE2 (693 aa).

Residues 653-693 (LRANQETSKMNDIAEKLAEQRRARAASDDSDDNNDENMDLD) form a disordered region. Residues 664–679 (DIAEKLAEQRRARAAS) are compositionally biased toward basic and acidic residues. Acidic residues predominate over residues 680-693 (DDSDDNNDENMDLD).

This sequence belongs to the heat shock protein 70 family.

Its function is as follows. Has a calcium-dependent calmodulin-binding activity. The polypeptide is Heat shock protein homolog SSE2 (SSE2) (Saccharomyces cerevisiae (strain ATCC 204508 / S288c) (Baker's yeast)).